The chain runs to 94 residues: MTKSELIERLCAEQTHLSAKEIEDAVKDILEHMASTLESGDRIEIRGFGSFSLHYREPRVGRNPKTGDKVELEGKYVPHFKPGKELRERVNSGL.

It belongs to the bacterial histone-like protein family. Heterodimer of an alpha and a beta chain.

Functionally, this protein is one of the two subunits of integration host factor, a specific DNA-binding protein that functions in genetic recombination as well as in transcriptional and translational control. This is Integration host factor subunit beta from Vibrio atlanticus (strain LGP32) (Vibrio splendidus (strain Mel32)).